The chain runs to 340 residues: Pre-rRNA-processing protein esf-2 (340 aa).

Composition is skewed to basic and acidic residues over residues 1–12 (MPEDDVRNKFLD) and 19–32 (DAGH…DFQK). Residues 1–103 (MPEDDVRNKF…KSVLASDLPG (103 aa)) are disordered. Positions 44–64 (DDEDSEADDFTDAEEEHDQDD) are enriched in acidic residues. Over residues 65–95 (AESKDAPAKDGQETTDGKEKKDGKKEKEKKS) the composition is skewed to basic and acidic residues. An RRM domain is found at 124 to 214 (GVVYISRVPP…KKGSYYRDDI (91 aa)). The interval 272–329 (AKKASKGSKAGGEGAAQVTESTIPSAAATTTTTTNDDKRRTFKQIPLAKKRKLDETQP) is disordered.

Belongs to the ESF2/ABP1 family.

The protein resides in the nucleus. It localises to the nucleolus. Functionally, involved in the small subunit (SSU) processome assembly and function, and in the 18S rRNA synthesis. Required for the early cleavages at sites A0, A1 and A2. The protein is Pre-rRNA-processing protein esf-2 (esf-2) of Neurospora crassa (strain ATCC 24698 / 74-OR23-1A / CBS 708.71 / DSM 1257 / FGSC 987).